Here is a 232-residue protein sequence, read N- to C-terminus: MPKHGKKLTEALKQVDRSVLYDPAEAFELLKKVAPAKFDETVEVAVRLGVDPRHADQQVRGAVVLPHGTGKTRTVLVFAKGDKAREAEEAGADFVGAEDMVARIQQEGWLGFDVAIATPDMMGMVGKLGRILGPRGLMPNPKTGTVTFDIARAVKEVKAGKIEYRVDKAGIIHAPIGKVSFSTEKLVENLRTLIEALIRAKPAAAKGQYLKGISVSSTMGPGIKVNTQKVTA.

The protein belongs to the universal ribosomal protein uL1 family. In terms of assembly, part of the 50S ribosomal subunit.

Its function is as follows. Binds directly to 23S rRNA. The L1 stalk is quite mobile in the ribosome, and is involved in E site tRNA release. In terms of biological role, protein L1 is also a translational repressor protein, it controls the translation of the L11 operon by binding to its mRNA. The sequence is that of Large ribosomal subunit protein uL1 from Pelotomaculum thermopropionicum (strain DSM 13744 / JCM 10971 / SI).